The chain runs to 291 residues: Diaminopimelate epimerase (291 aa).

Asn13, Gln46, and Asn66 together coordinate substrate. Cys75 functions as the Proton donor in the catalytic mechanism. Residues 76-77 (GN), Asn156, Asn189, and 207-208 (ER) contribute to the substrate site. Cys216 serves as the catalytic Proton acceptor. Residue 217-218 (GS) coordinates substrate.

It belongs to the diaminopimelate epimerase family. As to quaternary structure, homodimer.

The protein localises to the cytoplasm. It carries out the reaction (2S,6S)-2,6-diaminopimelate = meso-2,6-diaminopimelate. Its pathway is amino-acid biosynthesis; L-lysine biosynthesis via DAP pathway; DL-2,6-diaminopimelate from LL-2,6-diaminopimelate: step 1/1. In terms of biological role, catalyzes the stereoinversion of LL-2,6-diaminopimelate (L,L-DAP) to meso-diaminopimelate (meso-DAP), a precursor of L-lysine and an essential component of the bacterial peptidoglycan. The protein is Diaminopimelate epimerase of Rhodospirillum centenum (strain ATCC 51521 / SW).